The chain runs to 1135 residues: Potassium channel subfamily T member 2 (1135 aa).

Residues 1–63 (MVDLESEVPP…KNQRSSLRIR (63 aa)) are Cytoplasmic-facing. The helical transmembrane segment at 64 to 84 (LFNFSLKLLSCLLYIIRVLLE) threads the bilayer. Residues 85 to 101 (NPSQGNEWSHIFWVNRS) lie on the Extracellular side of the membrane. An N-linked (GlcNAc...) asparagine glycan is attached at asparagine 99. The chain crosses the membrane as a helical span at residues 102 to 122 (LPLWGLQVSVALISLFETILL). The Cytoplasmic segment spans residues 123–137 (GYLSYKGNIWEQILR). A helical membrane pass occupies residues 138–158 (IPFILEIINAVPFIISIFWPS). At 159 to 164 (LRNLFV) the chain is on the extracellular side. Residues 165–185 (PVFLNCWLAKHALENMINDLH) traverse the membrane as a helical segment. Residues 186-198 (RAIQRTQSAMFNQ) lie on the Cytoplasmic side of the membrane. Residues 199-219 (VLILISTLLCLIFTCICGIQH) traverse the membrane as a helical segment. The Extracellular segment spans residues 220–228 (LERIGKKLN). An intramembrane region (pore-forming) is located at residues 229 to 249 (LFDSLYFCIVTFSTVGFGDVT). The Extracellular portion of the chain corresponds to 250 to 256 (PETWSSK). The chain crosses the membrane as a helical span at residues 257–277 (LFVVAMICVALVVLPIQFEQL). The Cytoplasmic portion of the chain corresponds to 278 to 1135 (AYLWMERQKS…GQDSREETQL (858 aa)). RCK N-terminal domains follow at residues 299–435 (EKHV…DHVV) and 718–858 (NKLI…CYSL). Disordered stretches follow at residues 977–1010 (VEEW…HPLL), 1017–1036 (WARR…AEKI), and 1113–1135 (SEPS…ETQL). Residues 1017–1030 (WARRLSRKGPKHSG) show a composition bias toward basic residues. Residues 1118–1127 (RNSICNVTGQ) show a composition bias toward polar residues.

It belongs to the potassium channel family. Calcium-activated (TC 1.A.1.3) subfamily. KCa4.2/KCNT2 sub-subfamily. Homotetramer. Forms heteromeric channels with KCNT1; these heterodimer channels differ from the homomers in their unitary conductance, kinetic behavior, subcellular localization, and response to activation of protein kinase C. In terms of processing, phosphorylated by protein kinase C. Phosphorylation of the C-terminal domain inhibits channel activity.

It is found in the cell membrane. It carries out the reaction K(+)(in) = K(+)(out). Its activity is regulated as follows. Are normally in a closed state unless activated by an increase in intracellular Na(+) and Cl(-). Inhibited upon stimulation of G-protein coupled receptors, such as CHRM1 and GRM1. There is conflicting data about the effect of ATP on KNCT2 channels activity. Intracellular ATP was initially report to inhibit the channel activity. However, others studies conclude that KNCT2 channels are not inhibited by intracellular ATP. Its function is as follows. Sodium-activated and chloride-activated potassium channel. Produces rapidly activating outward rectifier K(+) currents. Contributes to regulate neuronal excitability. The sequence is that of Potassium channel subfamily T member 2 (KCNT2) from Homo sapiens (Human).